Here is a 215-residue protein sequence, read N- to C-terminus: Ras-related protein Rab-5A (215 aa).

10 residues coordinate GTP: S29, A30, G32, K33, S34, S35, H46, E47, T52, and G78. S34 lines the Mg(2+) pocket. 2 short sequence motifs (switch) span residues 44 to 56 (QFHE…IGAA) and 77 to 93 (AGQE…YRGA). A Mg(2+)-binding site is contributed by T52. The residue at position 84 (S84) is a Phosphoserine. Positions 133, 134, 136, 164, and 165 each coordinate GTP. A disordered region spans residues 181–215 (LPKNEPQNPGANSARGRGVDLTEPAQPARSQCCSN). 2 S-geranylgeranyl cysteine lipidation sites follow: C212 and C213.

It belongs to the small GTPase superfamily. Rab family. In terms of assembly, interacts with GDI1; this promotes dissociation from membranes; phosphorylation at Ser-84 disrupts this interaction. Interacts with GDI2; phosphorylation at Ser-84 disrupts the interaction. Interacts with EEA1. Interacts with RIN1 and GAPVD1, which regulate its pathway, probably by acting as a GEF. Interacts with ALS2CL, SUN2, ZFYVE20 and RUFY1. Interacts with RABEP1; one RABEP1 homodimer binds two RAB5A chains, but at opposite sides of the dimer. Interacts with SGSM1, SGSM3 and PIK3CB. Interacts with RINL. May be a component of a complex composed of RAB5A, DYN2 and PIK3C3. Does not interact with the BLOC-3 complex (heterodimer of HPS1 and HPS4). Interacts with CLN5. Interacts with APPL2. Interacts with F8A1/F8A2/F8A3. Found in a complex with F8A1/F8A2/F8A3, HTT and RAB5A; mediates the recruitment of HTT by RAB5A onto early endosomes. Interacts with ATP9A. Interacts with PPP1R21; mediates the recruitment of FERRY complex by RAB5A onto early endosomes. Requires Mg(2+) as cofactor. In terms of processing, phosphorylation of Ser-84 in the switch II region by LRRK2 prevents the association of RAB regulatory proteins, including RAB GDP dissociation inhibitors GDI1 and GDI2.

The protein resides in the cell membrane. The protein localises to the early endosome membrane. It localises to the melanosome. Its subcellular location is the cytoplasmic vesicle. It is found in the cell projection. The protein resides in the ruffle. The protein localises to the membrane. It localises to the cytoplasm. Its subcellular location is the cytosol. It is found in the phagosome membrane. The protein resides in the endosome membrane. The enzyme catalyses GTP + H2O = GDP + phosphate + H(+). Its activity is regulated as follows. Regulated by guanine nucleotide exchange factors (GEFs) including RINL, which promote the exchange of bound GDP for free GTP. Regulated by GTPase activating proteins (GAPs) which increase the GTP hydrolysis activity. Inhibited by GDP dissociation inhibitors (GDIs). Functionally, the small GTPases Rab are key regulators of intracellular membrane trafficking, from the formation of transport vesicles to their fusion with membranes. Rabs cycle between an inactive GDP-bound form and an active GTP-bound form that is able to recruit to membranes different sets of downstream effectors directly responsible for vesicle formation, movement, tethering and fusion. RAB5A is required for the fusion of plasma membranes and early endosomes. Contributes to the regulation of filopodia extension. Required for the exosomal release of SDCBP, CD63, PDCD6IP and syndecan. Regulates maturation of apoptotic cell-containing phagosomes, probably downstream of DYN2 and PIK3C3. The polypeptide is Ras-related protein Rab-5A (Rattus norvegicus (Rat)).